Here is a 194-residue protein sequence, read N- to C-terminus: GTP cyclohydrolase 1 (194 aa).

Residues cysteine 83, histidine 86, and cysteine 155 each contribute to the Zn(2+) site.

Belongs to the GTP cyclohydrolase I family. In terms of assembly, toroid-shaped homodecamer, composed of two pentamers of five dimers.

It catalyses the reaction GTP + H2O = 7,8-dihydroneopterin 3'-triphosphate + formate + H(+). Its pathway is cofactor biosynthesis; 7,8-dihydroneopterin triphosphate biosynthesis; 7,8-dihydroneopterin triphosphate from GTP: step 1/1. The sequence is that of GTP cyclohydrolase 1 from Streptococcus pyogenes serotype M5 (strain Manfredo).